The chain runs to 986 residues: E3 ubiquitin-protein ligase Arkadia (986 aa).

Residues lysine 19, lysine 28, lysine 34, lysine 47, lysine 59, lysine 73, lysine 87, lysine 96, and lysine 110 each participate in a glycyl lysine isopeptide (Lys-Gly) (interchain with G-Cter in SUMO2) cross-link. Over residues 66–89 (HLCDDSQKQEKDMNGNQQEQEKSL) the composition is skewed to basic and acidic residues. A disordered region spans residues 66–106 (HLCDDSQKQEKDMNGNQQEQEKSLVVRKKRKSQQAGPSYVQ). Residues 120 to 191 (QHLGTPSDED…HKWPRTETES (72 aa)) form a disordered region. Residues 132–151 (SSFSDCLSSPSSSLHFGDSD) are compositionally biased toward low complexity. The segment covering 164–173 (RHSQTILNAK) has biased composition (polar residues). Lysine 173 is covalently cross-linked (Glycyl lysine isopeptide (Lys-Gly) (interchain with G-Cter in SUMO2)). A compositionally biased stretch (basic residues) spans 174–184 (SRSHSARSHKW). Residues lysine 198 and lysine 218 each participate in a glycyl lysine isopeptide (Lys-Gly) (interchain with G-Cter in SUMO2) cross-link. The interaction with AXIN1 stretch occupies residues 241 to 404 (VLARRKYALL…VPTTSARMES (164 aa)). A disordered region spans residues 248-277 (ALLPSSSSSSENDLSSESSSSSSTEGEEDL). Positions 252–271 (SSSSSSENDLSSESSSSSST) are enriched in low complexity. The short motif at 300–304 (VVVIE) is the SUMO interaction motif 1 (SIM) element. Residues 325–331 (EVEIVTV) carry the SUMO interaction motif 2 (SIM) motif. The segment at 337–373 (SRSTLGHSRSHWSQGSSSHASRPQEPRNRSRISTVIQ) is disordered. A compositionally biased stretch (low complexity) spans 347–357 (HWSQGSSSHAS). The short motif at 382-386 (VVDLT) is the SUMO interaction motif 3 (SIM) element. 5 disordered regions span residues 389–471 (EDEP…ETGP), 506–561 (QQHG…SYHE), 610–646 (APSQ…RHYM), 659–684 (HQAS…VDYV), and 696–719 (ISSH…TAAP). Positions 395 to 466 (VPTTSARMES…DSRRTTSSAV (72 aa)) are enriched in polar residues. A compositionally biased stretch (basic residues) spans 508-522 (HGHHFQHHHHHHHTP). Positions 551-561 (ANSSSGTSYHE) are enriched in polar residues. Pro residues predominate over residues 670 to 680 (NPPPQTQPPPQ). The interval 907-909 (YPH) is ubiquitin binding. Residues lysine 915 and lysine 919 each participate in a glycyl lysine isopeptide (Lys-Gly) (interchain with G-Cter in SUMO2) cross-link. Positions 934 and 937 each coordinate Zn(2+). The segment at 934–975 (CTICLSILEEGEDVRRLPCMHLFHQVCVDQWLITNKKCPICR) adopts an RING-type; atypical zinc-finger fold. Residues 949-953 (RLPCM) are ubiquitin binding. Zn(2+) is bound by residues histidine 957 and cysteine 960.

It belongs to the Arkadia family. In terms of assembly, monomer. Interacts with SMAD6, SMAD7, AXIN1, AXIN2 and SKIL isoform SNON. Interacts with (phosphorylated) SMAD2 and SMAD3. Part of a complex containing RNF111, AXIN1 and SMAD7. Interacts (via SIM domains) with SUMO1 and SUMO2.

The protein localises to the nucleus. It is found in the cytoplasm. It localises to the PML body. The enzyme catalyses S-ubiquitinyl-[E2 ubiquitin-conjugating enzyme]-L-cysteine + [acceptor protein]-L-lysine = [E2 ubiquitin-conjugating enzyme]-L-cysteine + N(6)-ubiquitinyl-[acceptor protein]-L-lysine.. The protein operates within protein modification; protein ubiquitination. With respect to regulation, binds free ubiquitin non-covalently via its RING-type zinc finger. Ubiquitin-binding leads to enhance the E3 ubiquitin-protein ligase activity by stabilizing the ubiquitin-conjugating enzyme E2 (donor ubiquitin) in the 'closed' conformation and activating ubiquitin transfer. Functionally, E3 ubiquitin-protein ligase. Required for mesoderm patterning during embryonic development. Acts as an enhancer of the transcriptional responses of the SMAD2/SMAD3 effectors, which are activated downstream of BMP. Acts by mediating ubiquitination and degradation of SMAD inhibitors such as SMAD7, inducing their proteasomal degradation and thereby enhancing the transcriptional activity of TGF-beta and BMP. In addition to enhance transcription of SMAD2/SMAD3 effectors, also regulates their turnover by mediating their ubiquitination and subsequent degradation, coupling their activation with degradation, thereby ensuring that only effectors 'in use' are degraded. Activates SMAD3/SMAD4-dependent transcription by triggering signal-induced degradation of SNON isoform of SKIL. Associates with UBE2D2 as an E2 enzyme. Specifically binds polysumoylated chains via SUMO interaction motifs (SIMs) and mediates ubiquitination of sumoylated substrates. Catalyzes 'Lys-63'-linked ubiquitination of sumoylated XPC in response to UV irradiation, promoting nucleotide excision repair. Mediates ubiquitination and degradation of sumoylated PML. The regulation of the BMP-SMAD signaling is however independent of sumoylation and is not dependent of SUMO interaction motifs (SIMs). This chain is E3 ubiquitin-protein ligase Arkadia (RNF111), found in Pongo abelii (Sumatran orangutan).